A 327-amino-acid chain; its full sequence is Eukaryotic translation initiation factor 3 subunit I (327 aa).

WD repeat units follow at residues 8 to 47, 50 to 89, 147 to 186, 189 to 228, and 286 to 327; these read GHQR…RLGT, GHIG…ALGK, EQQS…ELNS, DHTA…CLKT, and GHFG…HTFE.

This sequence belongs to the eIF-3 subunit I family. Component of the eukaryotic translation initiation factor 3 (eIF-3) complex.

The protein resides in the cytoplasm. Functionally, component of the eukaryotic translation initiation factor 3 (eIF-3) complex, which is involved in protein synthesis of a specialized repertoire of mRNAs and, together with other initiation factors, stimulates binding of mRNA and methionyl-tRNAi to the 40S ribosome. The eIF-3 complex specifically targets and initiates translation of a subset of mRNAs involved in cell proliferation. In Anopheles gambiae (African malaria mosquito), this protein is Eukaryotic translation initiation factor 3 subunit I.